We begin with the raw amino-acid sequence, 43 residues long: METATLVAIFISGSLVSFTGYALYTAFGQPSQQLRDPFEEHGD.

A helical membrane pass occupies residues 5–27; it reads TLVAIFISGSLVSFTGYALYTAF.

This sequence belongs to the PsbN family.

The protein localises to the plastid. It localises to the chloroplast thylakoid membrane. Its function is as follows. May play a role in photosystem I and II biogenesis. This is Protein PsbN from Nelumbo lutea (American lotus).